The sequence spans 451 residues: UPF0210 protein NMC1568 (451 aa).

This sequence belongs to the UPF0210 family. Homodimer.

The polypeptide is UPF0210 protein NMC1568 (Neisseria meningitidis serogroup C / serotype 2a (strain ATCC 700532 / DSM 15464 / FAM18)).